Consider the following 262-residue polypeptide: Adenosylcobinamide-GDP ribazoletransferase (262 aa).

The next 8 helical transmembrane spans lie at 4-21 (AWSG…IPIR), 37-57 (AFPL…FIFS), 62-82 (LSPL…AGGL), 112-132 (VGAF…LFVF), 141-161 (IFLI…LLIY), 181-201 (YDAH…CAIH), 202-222 (FSVW…VFVA), and 236-256 (DALG…IWLL).

The protein belongs to the CobS family. The cofactor is Mg(2+).

It localises to the cell membrane. It catalyses the reaction alpha-ribazole + adenosylcob(III)inamide-GDP = adenosylcob(III)alamin + GMP + H(+). It carries out the reaction alpha-ribazole 5'-phosphate + adenosylcob(III)inamide-GDP = adenosylcob(III)alamin 5'-phosphate + GMP + H(+). The protein operates within cofactor biosynthesis; adenosylcobalamin biosynthesis; adenosylcobalamin from cob(II)yrinate a,c-diamide: step 7/7. Functionally, joins adenosylcobinamide-GDP and alpha-ribazole to generate adenosylcobalamin (Ado-cobalamin). Also synthesizes adenosylcobalamin 5'-phosphate from adenosylcobinamide-GDP and alpha-ribazole 5'-phosphate. The chain is Adenosylcobinamide-GDP ribazoletransferase from Geobacillus sp. (strain WCH70).